The chain runs to 95 residues: MNPKHWGRAAWTIIFIVLSQAGLDGNIEACKRKLYTIVSTLPCPACRRHATIAIEDNNIMSSNDLNYIYYFFIRLFNNLASDPKYAIDVSKVKPL.

Residues 1–8 are Intravirion-facing; the sequence is MNPKHWGR. Positions 1–95 constitute an ERV/ALR sulfhydryl oxidase domain; that stretch reads MNPKHWGRAA…AIDVSKVKPL (95 aa). The chain crosses the membrane as a helical span at residues 9–25; it reads AAWTIIFIVLSQAGLDG. The Virion surface segment spans residues 26-95; the sequence is NIEACKRKLY…AIDVSKVKPL (70 aa). Residues Cys-43 and Cys-46 are joined by a disulfide bond.

Belongs to the orthopoxvirus OPG072 family. Interacts with OPG128; this interaction involves formation of a transient disulfide-bonded intermediate, allowing disulfide bond transfer. Requires FAD as cofactor.

The protein resides in the virion membrane. It is found in the host cytoplasm. It catalyses the reaction 2 R'C(R)SH + O2 = R'C(R)S-S(R)CR' + H2O2. Its function is as follows. FAD-dependent sulfhydryl oxidase that catalyzes disulfide bond formation. The complete pathway for formation of disulfide bonds in intracellular virion membrane proteins sequentially involves thiol-disulfide transfer between OPG072, OPG128 and OPG088. The sequence is that of Probable FAD-linked sulfhydryl oxidase OPG072 (OPG072) from Variola virus (isolate Human/India/Ind3/1967) (VARV).